Consider the following 123-residue polypeptide: uncharacterized protein (123 aa).

The interval 89–123 is disordered; it reads GVGGRKLGSEGQSLSENSEQRSLMRWGCGGSSERR. Over residues 98–109 the composition is skewed to polar residues; that stretch reads EGQSLSENSEQR.

This is an uncharacterized protein from Encephalitozoon cuniculi (strain GB-M1) (Microsporidian parasite).